The chain runs to 407 residues: Bifunctional enzyme IspD/IspF (407 aa).

The interval 1-247 (MVHIQADGAR…RLSHNALPDV (247 aa)) is 2-C-methyl-D-erythritol 4-phosphate cytidylyltransferase. A 2-C-methyl-D-erythritol 2,4-cyclodiphosphate synthase region spans residues 248–407 (RTGNGYDVHQ…ATVVFQGKPQ (160 aa)). A divalent metal cation is bound by residues D254 and H256. 4-CDP-2-C-methyl-D-erythritol 2-phosphate contacts are provided by residues 254 to 256 (DVH) and 280 to 281 (HS). H288 is an a divalent metal cation binding site. Residues 302–304 (DIG), 378–381 (TTNE), F385, and R388 each bind 4-CDP-2-C-methyl-D-erythritol 2-phosphate.

This sequence in the N-terminal section; belongs to the IspD/TarI cytidylyltransferase family. IspD subfamily. The protein in the C-terminal section; belongs to the IspF family. It depends on a divalent metal cation as a cofactor.

It carries out the reaction 2-C-methyl-D-erythritol 4-phosphate + CTP + H(+) = 4-CDP-2-C-methyl-D-erythritol + diphosphate. It catalyses the reaction 4-CDP-2-C-methyl-D-erythritol 2-phosphate = 2-C-methyl-D-erythritol 2,4-cyclic diphosphate + CMP. Its pathway is isoprenoid biosynthesis; isopentenyl diphosphate biosynthesis via DXP pathway; isopentenyl diphosphate from 1-deoxy-D-xylulose 5-phosphate: step 2/6. It participates in isoprenoid biosynthesis; isopentenyl diphosphate biosynthesis via DXP pathway; isopentenyl diphosphate from 1-deoxy-D-xylulose 5-phosphate: step 4/6. Bifunctional enzyme that catalyzes the formation of 4-diphosphocytidyl-2-C-methyl-D-erythritol from CTP and 2-C-methyl-D-erythritol 4-phosphate (MEP) (IspD), and catalyzes the conversion of 4-diphosphocytidyl-2-C-methyl-D-erythritol 2-phosphate (CDP-ME2P) to 2-C-methyl-D-erythritol 2,4-cyclodiphosphate (ME-CPP) with a corresponding release of cytidine 5-monophosphate (CMP) (IspF). The chain is Bifunctional enzyme IspD/IspF from Allorhizobium ampelinum (strain ATCC BAA-846 / DSM 112012 / S4) (Agrobacterium vitis (strain S4)).